Reading from the N-terminus, the 152-residue chain is SsrA-binding protein (152 aa).

This sequence belongs to the SmpB family.

The protein resides in the cytoplasm. Functionally, required for rescue of stalled ribosomes mediated by trans-translation. Binds to transfer-messenger RNA (tmRNA), required for stable association of tmRNA with ribosomes. tmRNA and SmpB together mimic tRNA shape, replacing the anticodon stem-loop with SmpB. tmRNA is encoded by the ssrA gene; the 2 termini fold to resemble tRNA(Ala) and it encodes a 'tag peptide', a short internal open reading frame. During trans-translation Ala-aminoacylated tmRNA acts like a tRNA, entering the A-site of stalled ribosomes, displacing the stalled mRNA. The ribosome then switches to translate the ORF on the tmRNA; the nascent peptide is terminated with the 'tag peptide' encoded by the tmRNA and targeted for degradation. The ribosome is freed to recommence translation, which seems to be the essential function of trans-translation. The polypeptide is SsrA-binding protein (Rickettsia bellii (strain RML369-C)).